Here is a 395-residue protein sequence, read N- to C-terminus: NADH-quinone oxidoreductase subunit D (395 aa).

The protein belongs to the complex I 49 kDa subunit family. In terms of assembly, NDH-1 is composed of 14 different subunits. Subunits NuoB, C, D, E, F, and G constitute the peripheral sector of the complex.

The protein localises to the cell inner membrane. The enzyme catalyses a quinone + NADH + 5 H(+)(in) = a quinol + NAD(+) + 4 H(+)(out). Functionally, NDH-1 shuttles electrons from NADH, via FMN and iron-sulfur (Fe-S) centers, to quinones in the respiratory chain. The immediate electron acceptor for the enzyme in this species is believed to be ubiquinone. Couples the redox reaction to proton translocation (for every two electrons transferred, four hydrogen ions are translocated across the cytoplasmic membrane), and thus conserves the redox energy in a proton gradient. The chain is NADH-quinone oxidoreductase subunit D from Anaplasma phagocytophilum (strain HZ).